Reading from the N-terminus, the 377-residue chain is 2-aminoethylphosphonate--pyruvate transaminase (377 aa).

Lysine 194 is subject to N6-(pyridoxal phosphate)lysine.

This sequence belongs to the class-V pyridoxal-phosphate-dependent aminotransferase family. PhnW subfamily. As to quaternary structure, homodimer. Pyridoxal 5'-phosphate is required as a cofactor.

It carries out the reaction (2-aminoethyl)phosphonate + pyruvate = phosphonoacetaldehyde + L-alanine. In terms of biological role, involved in phosphonate degradation. The chain is 2-aminoethylphosphonate--pyruvate transaminase from Cupriavidus taiwanensis (strain DSM 17343 / BCRC 17206 / CCUG 44338 / CIP 107171 / LMG 19424 / R1) (Ralstonia taiwanensis (strain LMG 19424)).